The chain runs to 187 residues: Lysozyme 3 (187 aa).

An N-terminal signal peptide occupies residues 1-18; it reads MNGLFLFCVATTAALAYG. Residues 68 to 183 form the I-type lysozyme domain; it reads TGIVSQQCLQ…WSHVHAQGCS (116 aa). 6 cysteine pairs are disulfide-bonded: Cys-75–Cys-151, Cys-80–Cys-86, Cys-91–Cys-100, Cys-113–Cys-133, Cys-123–Cys-129, and Cys-147–Cys-165. Glu-83 acts as the Proton donor in catalysis. The Nucleophile role is filled by Asp-94. 106–112 lines the substrate pocket; the sequence is KEGYWHD. Residues Tyr-137 and 158-160 each bind substrate; that span reads HNG.

Highest levels of expression detected in the digestive glands. Lower levels in the mantle, labial palps, gills and style-midgut sac, and lowest levels detected in the hemocytes. Not detected in the gonads.

The protein resides in the secreted. The catalysed reaction is Hydrolysis of (1-&gt;4)-beta-linkages between N-acetylmuramic acid and N-acetyl-D-glucosamine residues in a peptidoglycan and between N-acetyl-D-glucosamine residues in chitodextrins.. Its function is as follows. Has antibacterial activity against the Gram-negative bacterium E.coli. No antibacterial activity detected against the Gram-negative bacterium V.vulnificus. This chain is Lysozyme 3, found in Crassostrea virginica (Eastern oyster).